Reading from the N-terminus, the 353-residue chain is Photosystem II protein D1 (353 aa).

Thr-2 carries the N-acetylthreonine modification. Thr-2 carries the post-translational modification Phosphothreonine. 3 helical membrane-spanning segments follow: residues 29-46 (YIGWFGVLMIPTLLTATS), 118-133 (HFLLGVACYMGREWEL), and 142-156 (WIAVAYSAPVAAATA). Residue His-118 participates in chlorophyll a binding. Tyr-126 provides a ligand contact to pheophytin a. 2 residues coordinate [CaMn4O5] cluster: Asp-170 and Glu-189. The chain crosses the membrane as a helical span at residues 197–218 (FHMLGVAGVFGGSLFSAMHGSL). His-198 is a chlorophyll a binding site. A quinone contacts are provided by residues His-215 and 264–265 (SF). Residue His-215 coordinates Fe cation. A Fe cation-binding site is contributed by His-272. The chain crosses the membrane as a helical span at residues 274–288 (FLAAWPVVGIWFTAL). His-332, Glu-333, Asp-342, and Ala-344 together coordinate [CaMn4O5] cluster. The propeptide occupies 345–353 (AIEAPSTNG).

It belongs to the reaction center PufL/M/PsbA/D family. PSII is composed of 1 copy each of membrane proteins PsbA, PsbB, PsbC, PsbD, PsbE, PsbF, PsbH, PsbI, PsbJ, PsbK, PsbL, PsbM, PsbT, PsbX, PsbY, PsbZ, Psb30/Ycf12, at least 3 peripheral proteins of the oxygen-evolving complex and a large number of cofactors. It forms dimeric complexes. The D1/D2 heterodimer binds P680, chlorophylls that are the primary electron donor of PSII, and subsequent electron acceptors. It shares a non-heme iron and each subunit binds pheophytin, quinone, additional chlorophylls, carotenoids and lipids. D1 provides most of the ligands for the Mn4-Ca-O5 cluster of the oxygen-evolving complex (OEC). There is also a Cl(-1) ion associated with D1 and D2, which is required for oxygen evolution. The PSII complex binds additional chlorophylls, carotenoids and specific lipids. serves as cofactor. Post-translationally, tyr-161 forms a radical intermediate that is referred to as redox-active TyrZ, YZ or Y-Z. In terms of processing, C-terminally processed by CTPA; processing is essential to allow assembly of the oxygen-evolving complex and thus photosynthetic growth.

The protein localises to the plastid. It localises to the chloroplast thylakoid membrane. The enzyme catalyses 2 a plastoquinone + 4 hnu + 2 H2O = 2 a plastoquinol + O2. In terms of biological role, photosystem II (PSII) is a light-driven water:plastoquinone oxidoreductase that uses light energy to abstract electrons from H(2)O, generating O(2) and a proton gradient subsequently used for ATP formation. It consists of a core antenna complex that captures photons, and an electron transfer chain that converts photonic excitation into a charge separation. The D1/D2 (PsbA/PsbD) reaction center heterodimer binds P680, the primary electron donor of PSII as well as several subsequent electron acceptors. The polypeptide is Photosystem II protein D1 (Petunia hybrida (Petunia)).